A 222-amino-acid polypeptide reads, in one-letter code: MKVLILACLVALAIAREQEELNVVGETVESLSSSEESITHINKKIEKFQSEEQQQTEDELQDKIHPFAQAQSLVYPFTGPIPNSLPQNILPLTQTPVVVPPFLQPEIMGVPKVKETMVPKHKEMPFPKYPVEPFTESQSLTLTDVEKLHLPLPLVQSWMHQPPQPLSPTVMFPPQSVLSLSQPKVLPVPQKAVPQRDMPIQAFLLYQEPVLGPVRGPFPILV.

Residues 1–15 (MKVLILACLVALAIA) form the signal peptide. Residue threonine 27 is modified to Phosphothreonine. 4 positions are modified to phosphoserine: serine 30, serine 32, serine 33, and serine 34.

It belongs to the beta-casein family. As to expression, mammary gland specific. Secreted in milk.

The protein localises to the secreted. Its function is as follows. Important role in determination of the surface properties of the casein micelles. In Capra hircus (Goat), this protein is Beta-casein (CSN2).